Consider the following 311-residue polypeptide: Aspartate carbamoyltransferase catalytic subunit (311 aa).

Positions 58 and 59 each coordinate carbamoyl phosphate. Lysine 86 lines the L-aspartate pocket. Positions 108, 136, and 139 each coordinate carbamoyl phosphate. L-aspartate contacts are provided by arginine 169 and arginine 223. Residues glycine 264 and proline 265 each coordinate carbamoyl phosphate.

The protein belongs to the aspartate/ornithine carbamoyltransferase superfamily. ATCase family. As to quaternary structure, heterododecamer (2C3:3R2) of six catalytic PyrB chains organized as two trimers (C3), and six regulatory PyrI chains organized as three dimers (R2).

It catalyses the reaction carbamoyl phosphate + L-aspartate = N-carbamoyl-L-aspartate + phosphate + H(+). It functions in the pathway pyrimidine metabolism; UMP biosynthesis via de novo pathway; (S)-dihydroorotate from bicarbonate: step 2/3. Catalyzes the condensation of carbamoyl phosphate and aspartate to form carbamoyl aspartate and inorganic phosphate, the committed step in the de novo pyrimidine nucleotide biosynthesis pathway. In Ruegeria pomeroyi (strain ATCC 700808 / DSM 15171 / DSS-3) (Silicibacter pomeroyi), this protein is Aspartate carbamoyltransferase catalytic subunit.